A 663-amino-acid chain; its full sequence is UvrABC system protein B (663 aa).

Residues 1–10 (MIDKRDDKPF) are compositionally biased toward basic and acidic residues. The interval 1–23 (MIDKRDDKPFKLKSKYKPSGDQP) is disordered. Positions 31–418 (DNIEGGEKAQ…TNTIIEQIIR (388 aa)) constitute a Helicase ATP-binding domain. Residue 44–51 (GATGTGKT) participates in ATP binding. The Beta-hairpin motif lies at 97 to 120 (YYDYYQPEAYVPSSDTYIEKDSSV). A Helicase C-terminal domain is found at 435-597 (QMDDLLGEIN…IVPQTIKKDI (163 aa)). In terms of domain architecture, UVR spans 627–662 (KEAINALQKQMQEAAELLDFELAAQMRDLILELKLM).

The protein belongs to the UvrB family. In terms of assembly, forms a heterotetramer with UvrA during the search for lesions. Interacts with UvrC in an incision complex.

The protein localises to the cytoplasm. Its function is as follows. The UvrABC repair system catalyzes the recognition and processing of DNA lesions. A damage recognition complex composed of 2 UvrA and 2 UvrB subunits scans DNA for abnormalities. Upon binding of the UvrA(2)B(2) complex to a putative damaged site, the DNA wraps around one UvrB monomer. DNA wrap is dependent on ATP binding by UvrB and probably causes local melting of the DNA helix, facilitating insertion of UvrB beta-hairpin between the DNA strands. Then UvrB probes one DNA strand for the presence of a lesion. If a lesion is found the UvrA subunits dissociate and the UvrB-DNA preincision complex is formed. This complex is subsequently bound by UvrC and the second UvrB is released. If no lesion is found, the DNA wraps around the other UvrB subunit that will check the other stand for damage. The sequence is that of UvrABC system protein B from Streptococcus pyogenes serotype M18 (strain MGAS8232).